A 142-amino-acid polypeptide reads, in one-letter code: FAD synthase (142 aa).

ATP contacts are provided by residues 9–10 (TF), 14–17 (HPGH), D92, and Y119.

Belongs to the archaeal FAD synthase family. As to quaternary structure, homodimer. A divalent metal cation is required as a cofactor.

It carries out the reaction FMN + ATP + H(+) = FAD + diphosphate. It functions in the pathway cofactor biosynthesis; FAD biosynthesis; FAD from FMN: step 1/1. Catalyzes the transfer of the AMP portion of ATP to flavin mononucleotide (FMN) to produce flavin adenine dinucleotide (FAD) coenzyme. The sequence is that of FAD synthase from Halorhabdus utahensis (strain DSM 12940 / JCM 11049 / AX-2).